A 175-amino-acid chain; its full sequence is Sec-independent protein translocase protein TatB (175 aa).

Residues 1 to 21 (MLDLGLSKMALIGVVALVVLG) traverse the membrane as a helical segment. Over residues 96–115 (VSPGGSAAADAPDGPSAASG) the composition is skewed to low complexity. Disordered regions lie at residues 96 to 119 (VSPG…EPSW) and 152 to 175 (QVQS…ARFL). Residues 160–175 (VARHRPASLRRPARFL) are compositionally biased toward basic residues.

It belongs to the TatB family. In terms of assembly, the Tat system comprises two distinct complexes: a TatABC complex, containing multiple copies of TatA, TatB and TatC subunits, and a separate TatA complex, containing only TatA subunits. Substrates initially bind to the TatABC complex, which probably triggers association of the separate TatA complex to form the active translocon.

It localises to the cell inner membrane. In terms of biological role, part of the twin-arginine translocation (Tat) system that transports large folded proteins containing a characteristic twin-arginine motif in their signal peptide across membranes. Together with TatC, TatB is part of a receptor directly interacting with Tat signal peptides. TatB may form an oligomeric binding site that transiently accommodates folded Tat precursor proteins before their translocation. The sequence is that of Sec-independent protein translocase protein TatB from Burkholderia pseudomallei (strain 1710b).